Consider the following 191-residue polypeptide: MTQQITLIKDKILSDNYFTLHNITYDLTRKDGEVIRHKREVYDRGNGATILLYNAKKKTVVLIRQFRVATWVNGNESGQLIETCAGLLDNDEPEVCIRKEAIEETGYEVGEVRKLFELYMSPGGVTELIHFFIAEYSDNQRANAGGGVEDEDIEVLELPFSQALEMIKTGEIRDGKTVLLLNYLQMSHLID.

GDP-alpha-D-mannose-binding positions include Tyr-17, 38–40 (KRE), Arg-67, and 85–87 (AGL). The region spanning 43 to 180 (DRGNGATILL…EIRDGKTVLL (138 aa)) is the Nudix hydrolase domain. Ala-85, Glu-100, and Glu-104 together coordinate Mg(2+). The Nudix box motif lies at 86–106 (GLLDNDEPEVCIRKEAIEETG). Residues Glu-104, Glu-127, 150–151 (DE), and Lys-176 each bind GDP-alpha-D-mannose. A Mg(2+)-binding site is contributed by Glu-151.

This sequence belongs to the Nudix hydrolase family. NudK subfamily. As to quaternary structure, homodimer. The cofactor is Mg(2+).

The catalysed reaction is GDP-alpha-D-mannose + H2O = alpha-D-mannose 1-phosphate + GMP + 2 H(+). Functionally, nucleoside diphosphate sugar hydrolase that hydrolyzes GDP-mannose as its preferred substrate, yielding GMP and mannose-1-phosphate. The protein is GDP-mannose pyrophosphatase (nudK) of Shigella dysenteriae serotype 1 (strain Sd197).